A 338-amino-acid chain; its full sequence is DNA-directed RNA polymerase subunit alpha (338 aa).

Residues 1 to 234 form an alpha N-terminal domain (alpha-NTD) region; that stretch reads MIERNWNELI…DQLQIFITFE (234 aa). The interval 250–338 is alpha C-terminal domain (alpha-CTD); sequence FNPALLKKVD…DLAKKFEDQI (89 aa).

The protein belongs to the RNA polymerase alpha chain family. Homodimer. The RNAP catalytic core consists of 2 alpha, 1 beta, 1 beta' and 1 omega subunit. When a sigma factor is associated with the core the holoenzyme is formed, which can initiate transcription.

The enzyme catalyses RNA(n) + a ribonucleoside 5'-triphosphate = RNA(n+1) + diphosphate. Its function is as follows. DNA-dependent RNA polymerase catalyzes the transcription of DNA into RNA using the four ribonucleoside triphosphates as substrates. The protein is DNA-directed RNA polymerase subunit alpha of Caulobacter vibrioides (strain ATCC 19089 / CIP 103742 / CB 15) (Caulobacter crescentus).